The sequence spans 267 residues: MSSLNNEEWDLLISGKKATLQYPIPLLCYPAPEVVSIAQIIDHTQLSLSATGSQIDVLCAEAKEYGFATVCVRPDYVSRAVQYLQGTQVGVTCVIGFHEGTYSTDQKVSEAKRAMQNGASELDMVMNYPWLSEKRYTDVFQDIRAVRLAAKDAILKVILETSQLTADEIIAGCVLSSLAGADYVKTSTGFNGPGASIENVSLMSAVCDSLQSETRVKASGGIRTIEDCVKMVRAGAERLGASAGVKIVNETRLGNRQVDEPMEPTNY.

D123 (proton donor/acceptor) is an active-site residue. K185 acts as the Schiff-base intermediate with acetaldehyde in catalysis. The active-site Proton donor/acceptor is K217.

The protein belongs to the DeoC/FbaB aldolase family. DeoC type 1 subfamily.

Its subcellular location is the cytoplasm. The catalysed reaction is 2-deoxy-D-ribose 5-phosphate = D-glyceraldehyde 3-phosphate + acetaldehyde. The protein operates within carbohydrate degradation; 2-deoxy-D-ribose 1-phosphate degradation; D-glyceraldehyde 3-phosphate and acetaldehyde from 2-deoxy-alpha-D-ribose 1-phosphate: step 2/2. Functionally, catalyzes a reversible aldol reaction between acetaldehyde and D-glyceraldehyde 3-phosphate to generate 2-deoxy-D-ribose 5-phosphate. This is Deoxyribose-phosphate aldolase from Coccidioides immitis (strain RS) (Valley fever fungus).